Reading from the N-terminus, the 319-residue chain is MEESAVDDVIERLLEVRNNRPGKQVNLAEGEIRQLCLTAKDVFMSQPNLLELEAPIKICGDIHGQYTDLLRLFEYGGFPPEANYLFLGDYVDRGKQSLETICLLLAFKVKYPKNFFLLRGNHECASINRIYGFYDVCKRRYNIRLWKTFTDCFNCLPACALVDEKIICMHGGLSPELKSLDAIRHIPRPTDVPDTGLLCDLLWSDPDKDVAGWGENDRGVSYTFGPDTVTGFLQKHDLDLICRAHQVVEDGYEFFAKRQLVTLFSAPNYCGEFDNAGALMSVDDTLMCSFQILKPSEKKGKLLYGSGALAGPGRGTPRR.

Asp-61, His-63, Asp-89, and Asn-121 together coordinate Mn(2+). Residue His-122 is the Proton donor of the active site. Mn(2+) contacts are provided by His-170 and His-245.

This sequence belongs to the PPP phosphatase family. PP-1 subfamily. The cofactor is Mn(2+).

It catalyses the reaction O-phospho-L-seryl-[protein] + H2O = L-seryl-[protein] + phosphate. The enzyme catalyses O-phospho-L-threonyl-[protein] + H2O = L-threonyl-[protein] + phosphate. The polypeptide is Serine/threonine-protein phosphatase PP1 isozyme 2 (Acetabularia peniculus (Green alga)).